Reading from the N-terminus, the 215-residue chain is Pyridoxine/pyridoxamine 5'-phosphate oxidase (215 aa).

Substrate is bound by residues 9-12 and K67; that span reads RRDY. FMN is bound by residues 62 to 67, 77 to 78, K84, and Q106; these read RVVLLK and FT. 3 residues coordinate substrate: Y124, R128, and S132. FMN contacts are provided by residues 141-142 and W186; that span reads QS. 192–194 is a substrate binding site; the sequence is RLH. An FMN-binding site is contributed by R196.

Belongs to the pyridoxamine 5'-phosphate oxidase family. In terms of assembly, homodimer. Requires FMN as cofactor.

The catalysed reaction is pyridoxamine 5'-phosphate + O2 + H2O = pyridoxal 5'-phosphate + H2O2 + NH4(+). It catalyses the reaction pyridoxine 5'-phosphate + O2 = pyridoxal 5'-phosphate + H2O2. It functions in the pathway cofactor metabolism; pyridoxal 5'-phosphate salvage; pyridoxal 5'-phosphate from pyridoxamine 5'-phosphate: step 1/1. Its pathway is cofactor metabolism; pyridoxal 5'-phosphate salvage; pyridoxal 5'-phosphate from pyridoxine 5'-phosphate: step 1/1. In terms of biological role, catalyzes the oxidation of either pyridoxine 5'-phosphate (PNP) or pyridoxamine 5'-phosphate (PMP) into pyridoxal 5'-phosphate (PLP). The protein is Pyridoxine/pyridoxamine 5'-phosphate oxidase of Chromohalobacter salexigens (strain ATCC BAA-138 / DSM 3043 / CIP 106854 / NCIMB 13768 / 1H11).